The sequence spans 266 residues: Pyridoxal phosphate phosphatase YigL (266 aa).

Residue D8 is the Nucleophile of the active site. D8 lines the Mg(2+) pocket. L9 provides a ligand contact to phosphate. A Mg(2+)-binding site is contributed by D10. Residues 42–43 (TG) and K191 each bind phosphate. Residue D214 coordinates Mg(2+). Position 217 (N217) interacts with phosphate.

It belongs to the HAD-like hydrolase superfamily. Cof family. Mg(2+) serves as cofactor. Mn(2+) is required as a cofactor. The cofactor is Co(2+). Requires Zn(2+) as cofactor.

The catalysed reaction is pyridoxal 5'-phosphate + H2O = pyridoxal + phosphate. It catalyses the reaction sugar phosphate + H2O = sugar + phosphate.. Functionally, catalyzes Strongly the dephosphorylation of pyridoxal-phosphate (PLP) and moderately the dephosphorylation of 2-deoxyglucose 6-phosphate (2bGLU6P) and beta-glucose 6-phosphate (bGlu6P). Also hydrolyzes both purines (GMP and IMP) and pyrimidines as secondary substrates. This chain is Pyridoxal phosphate phosphatase YigL (yigL), found in Escherichia coli (strain K12).